A 928-amino-acid polypeptide reads, in one-letter code: Autophagy-related protein 9 (928 aa).

Over 1 to 295 (MEQSGHEPGK…NGFHCIILQK (295 aa)) the chain is Cytoplasmic. Disordered stretches follow at residues 28 to 118 (SIHT…PFGS) and 188 to 216 (NDVKKNSTKKRQNSHNYNPTSTYTNSSSN). Acidic residues predominate over residues 77 to 86 (LESDTSEEDE). Residues 90-99 (GINSDSQVID) are compositionally biased toward polar residues. The span at 201–216 (SHNYNPTSTYTNSSSN) shows a compositional bias: low complexity. The chain crosses the membrane as a helical span at residues 296-316 (VLNILTLLFVVFVSSFMGYCV). Residues 317–345 (DYSKLPTSTRFSEIKIDHCYSQNITGFTK) lie on the Lumenal side of the membrane. An N-linked (GlcNAc...) asparagine glycan is attached at asparagine 339. Residues 346-366 (FLLFLFYGFVILKVIQLYFDI) traverse the membrane as a helical segment. Residues 367–507 (NNIREMKLFY…NELRKRFMLA (141 aa)) lie on the Cytoplasmic side of the membrane. Residues 508 to 528 (GFLNIILSPFLVSYFVLLYFF) lie within the membrane without spanning it. Residues 529–588 (RYFNEYKTSPENIGARQYTPMAEWKFREYNELYHIFRKRIGLSNPLASKYVDQFPKEKTN) lie on the Cytoplasmic side of the membrane. The chain crosses the membrane as a helical span at residues 589 to 609 (ILLKFVSFISGSFVAILAILA). Topologically, residues 610–625 (LWDPENFLNFEVTHDK) are lumenal. The chain crosses the membrane as a helical span at residues 626 to 646 (TVLFYITVLGAIWSISQGSVS). Residues 647-692 (TEYHVFDPEETLRELAEYTHYLPDSWKDRYHTEGVKQEFCELYNLR) lie on the Cytoplasmic side of the membrane. An intramembrane segment occupies 693–713 (ITVLLRELASLITTPFILWFS). The Cytoplasmic segment spans residues 714-928 (LPNSAGKMVD…EYYKKSDVGR (215 aa)). A disordered region spans residues 755 to 779 (FGTDGNETTEQDAATEEQDIDSEPD). Residues 761–779 (ETTEQDAATEEQDIDSEPD) show a composition bias toward acidic residues.

The protein belongs to the ATG9 family. In terms of assembly, homotrimer; forms a homotrimer with a central pore that forms a path between the two membrane leaflets. Post-translationally, phosphorylated by ATG1. ATG1 phosphorylation is required for preautophagosome elongation.

The protein localises to the preautophagosomal structure membrane. The protein resides in the cytoplasmic vesicle membrane. It is found in the golgi apparatus membrane. Its subcellular location is the endoplasmic reticulum membrane. It catalyses the reaction a 1,2-diacyl-sn-glycero-3-phosphocholine(in) = a 1,2-diacyl-sn-glycero-3-phosphocholine(out). The enzyme catalyses a 1,2-diacyl-sn-glycero-3-phospho-L-serine(in) = a 1,2-diacyl-sn-glycero-3-phospho-L-serine(out). The catalysed reaction is a 1,2-diacyl-sn-glycero-3-phosphoethanolamine(in) = a 1,2-diacyl-sn-glycero-3-phosphoethanolamine(out). It carries out the reaction a 1,2-diacyl-sn-glycero-3-phospho-(1D-myo-inositol-3-phosphate)(in) = a 1,2-diacyl-sn-glycero-3-phospho-(1D-myo-inositol-3-phosphate)(out). Phospholipid scramblase involved in autophagy and cytoplasm to vacuole transport (Cvt) vesicle formation. Cycles between the preautophagosomal structure/phagophore assembly site (PAS) and the cytoplasmic vesicle pool and supplies membrane for the growing autophagosome. Lipid scramblase activity plays a key role in preautophagosomal structure/phagophore assembly by distributing the phospholipids that arrive through ATG2 from the cytoplasmic to the luminal leaflet of the bilayer, thereby driving autophagosomal membrane expansion. Required for mitophagy. Also involved in endoplasmic reticulum-specific autophagic process and is essential for the survival of cells subjected to severe ER stress. Different machineries are required for anterograde trafficking to the PAS during either the Cvt pathway or bulk autophagy and for retrograde trafficking. This Candida glabrata (strain ATCC 2001 / BCRC 20586 / JCM 3761 / NBRC 0622 / NRRL Y-65 / CBS 138) (Yeast) protein is Autophagy-related protein 9 (ATG9).